The sequence spans 608 residues: Protein transport protein SEC9 (608 aa).

Disordered stretches follow at residues 1–23 (MGFKKMFKKKDPTESEIRESMQD) and 50–307 (VTQK…QTAA). A compositionally biased stretch (basic and acidic residues) spans 9–21 (KKDPTESEIRESM). 2 stretches are compositionally biased toward low complexity: residues 54–67 (SSAAPPAARSNPYA) and 74–85 (SGGNPYAAAAAG). Positions 100–121 (NGGGGNGGSNSNGGSNSNGGSN) are enriched in gly residues. The span at 122–134 (GSPYKMNNGGNNA) shows a compositional bias: low complexity. Residues 169–183 (SKKEEAPPPLEDPRL) show a composition bias toward basic and acidic residues. The segment covering 198 to 215 (ERDDYEPVYDVGLPEEPE) has biased composition (acidic residues). The span at 241–260 (NVDRELEEDKTALFGPRDDP) shows a compositional bias: basic and acidic residues. Positions 390 to 452 (RFTKQQSAAS…KIAEDKAKEL (63 aa)) constitute a t-SNARE coiled-coil homology 1 domain. Residues 514–533 (GEKSKHRKEMMSKYGSRPGR) form a disordered region. Residues 545–607 (DILEDEIDNN…HLNTARLAGI (63 aa)) enclose the t-SNARE coiled-coil homology 2 domain.

This sequence belongs to the SNAP-25 family.

This is Protein transport protein SEC9 (SEC9) from Yarrowia lipolytica (strain CLIB 122 / E 150) (Yeast).